Consider the following 413-residue polypeptide: Divalent metal cation transporter MntH (413 aa).

The next 11 helical transmembrane spans lie at leucine 19–alanine 39, alanine 46–isoleucine 66, valine 94–isoleucine 114, leucine 122–isoleucine 142, valine 156–glutamine 176, alanine 196–histidine 216, isoleucine 241–phenylalanine 261, isoleucine 290–glycine 310, alanine 329–leucine 349, valine 350–phenylalanine 370, and valine 392–valine 412.

It belongs to the NRAMP family.

It localises to the cell inner membrane. Its function is as follows. H(+)-stimulated, divalent metal cation uptake system. The sequence is that of Divalent metal cation transporter MntH from Klebsiella pneumoniae (strain 342).